Here is a 263-residue protein sequence, read N- to C-terminus: uncharacterized protein (263 aa).

It belongs to the AtsA family.

The protein localises to the plastid. It is found in the chloroplast. This is an uncharacterized protein from Pyropia yezoensis (Susabi-nori).